Here is a 393-residue protein sequence, read N- to C-terminus: Succinate--CoA ligase [ADP-forming] subunit beta (393 aa).

The region spanning K9–Y245 is the ATP-grasp domain. Residues K46, G53–G55, E99, I102, and E107 each bind ATP. Mg(2+) is bound by residues N200 and D214. Substrate is bound by residues N265 and G322–V324.

This sequence belongs to the succinate/malate CoA ligase beta subunit family. Heterotetramer of two alpha and two beta subunits. Mg(2+) serves as cofactor.

It carries out the reaction succinate + ATP + CoA = succinyl-CoA + ADP + phosphate. The enzyme catalyses GTP + succinate + CoA = succinyl-CoA + GDP + phosphate. The protein operates within carbohydrate metabolism; tricarboxylic acid cycle; succinate from succinyl-CoA (ligase route): step 1/1. Functionally, succinyl-CoA synthetase functions in the citric acid cycle (TCA), coupling the hydrolysis of succinyl-CoA to the synthesis of either ATP or GTP and thus represents the only step of substrate-level phosphorylation in the TCA. The beta subunit provides nucleotide specificity of the enzyme and binds the substrate succinate, while the binding sites for coenzyme A and phosphate are found in the alpha subunit. This Baumannia cicadellinicola subsp. Homalodisca coagulata protein is Succinate--CoA ligase [ADP-forming] subunit beta.